Here is a 230-residue protein sequence, read N- to C-terminus: Lipoprotein-releasing system ATP-binding protein LolD (230 aa).

In terms of domain architecture, ABC transporter spans 6–230; that stretch reads LQVQAVSKSY…GYLQVPESAQ (225 aa). ATP is bound at residue 42–49; the sequence is GTSGSGKS.

This sequence belongs to the ABC transporter superfamily. Lipoprotein translocase (TC 3.A.1.125) family. In terms of assembly, the complex is composed of two ATP-binding proteins (LolD) and two transmembrane proteins (LolC and LolE).

The protein resides in the cell inner membrane. Part of the ABC transporter complex LolCDE involved in the translocation of mature outer membrane-directed lipoproteins, from the inner membrane to the periplasmic chaperone, LolA. Responsible for the formation of the LolA-lipoprotein complex in an ATP-dependent manner. This is Lipoprotein-releasing system ATP-binding protein LolD from Shewanella oneidensis (strain ATCC 700550 / JCM 31522 / CIP 106686 / LMG 19005 / NCIMB 14063 / MR-1).